Reading from the N-terminus, the 707-residue chain is DNA ligase (707 aa).

NAD(+)-binding positions include 48–52 (DAEYD), 97–98 (SI), and Glu134. Lys136 serves as the catalytic N6-AMP-lysine intermediate. NAD(+)-binding residues include Arg157, Glu193, Lys320, and Lys344. The Zn(2+) site is built by Cys438, Cys441, Cys456, and Cys462. In terms of domain architecture, BRCT spans 621–707 (VAPKPLSGKT…DSPPDERIPA (87 aa)).

Belongs to the NAD-dependent DNA ligase family. LigA subfamily. It depends on Mg(2+) as a cofactor. Mn(2+) is required as a cofactor.

It catalyses the reaction NAD(+) + (deoxyribonucleotide)n-3'-hydroxyl + 5'-phospho-(deoxyribonucleotide)m = (deoxyribonucleotide)n+m + AMP + beta-nicotinamide D-nucleotide.. Functionally, DNA ligase that catalyzes the formation of phosphodiester linkages between 5'-phosphoryl and 3'-hydroxyl groups in double-stranded DNA using NAD as a coenzyme and as the energy source for the reaction. It is essential for DNA replication and repair of damaged DNA. This Polaromonas naphthalenivorans (strain CJ2) protein is DNA ligase.